Reading from the N-terminus, the 216-residue chain is UPF0323 lipoprotein HPG27_212 (216 aa).

The first 27 residues, 1–27, serve as a signal peptide directing secretion; that stretch reads MKKPYRKISDYAIVGGLSALVMVSIVG. Cys28 is lipidated: N-palmitoyl cysteine. Cys28 carries the S-diacylglycerol cysteine lipid modification. The span at 159–170 shows a compositional bias: polar residues; sequence QRTYKSPQAYQR. Residues 159-216 form a disordered region; sequence QRTYKSPQAYQRSQNSFSKSAPSASSMGGASKGQSGFFGSSRPTSSPAVSSGTRGFNS. A compositionally biased stretch (low complexity) spans 171–209; that stretch reads SQNSFSKSAPSASSMGGASKGQSGFFGSSRPTSSPAVSS.

The protein belongs to the UPF0323 family.

Its subcellular location is the cell membrane. This chain is UPF0323 lipoprotein HPG27_212, found in Helicobacter pylori (strain G27).